The chain runs to 502 residues: ATP synthase subunit alpha (502 aa).

G169–T176 contacts ATP.

The protein belongs to the ATPase alpha/beta chains family. F-type ATPases have 2 components, CF(1) - the catalytic core - and CF(0) - the membrane proton channel. CF(1) has five subunits: alpha(3), beta(3), gamma(1), delta(1), epsilon(1). CF(0) has three main subunits: a(1), b(2) and c(9-12). The alpha and beta chains form an alternating ring which encloses part of the gamma chain. CF(1) is attached to CF(0) by a central stalk formed by the gamma and epsilon chains, while a peripheral stalk is formed by the delta and b chains.

The protein localises to the cell membrane. The enzyme catalyses ATP + H2O + 4 H(+)(in) = ADP + phosphate + 5 H(+)(out). Produces ATP from ADP in the presence of a proton gradient across the membrane. The alpha chain is a regulatory subunit. In Clostridium perfringens (strain ATCC 13124 / DSM 756 / JCM 1290 / NCIMB 6125 / NCTC 8237 / Type A), this protein is ATP synthase subunit alpha.